The primary structure comprises 24 residues: M-poneritoxin-Ng2b (24 aa).

Leu24 is subject to Leucine amide.

Expressed by the venom gland.

The protein localises to the secreted. Its function is as follows. Has a broad spectrum of activity against both Gram-positive and Gram-negative bacteria. Is inactive against yeast, erythrocytes, and insects. The polypeptide is M-poneritoxin-Ng2b (Neoponera goeldii (Ponerine ant)).